Consider the following 106-residue polypeptide: Putative protein SH (106 aa).

The disordered stretch occupies residues 48–106; the sequence is HSQQNNSGHQFGDRFHSKGHQDTEGRILWKEASTRTTDSTETADTQLVQRQGNGGICLS. The segment covering 58 to 80 has biased composition (basic and acidic residues); that stretch reads FGDRFHSKGHQDTEGRILWKEAS. Positions 81-92 are enriched in low complexity; sequence TRTTDSTETADT.

As to expression, heart.

In terms of biological role, may be involved with the regulation of GNRH gene expression. It is not known if this protein is transcribed. The polypeptide is Putative protein SH (Rattus norvegicus (Rat)).